The following is a 396-amino-acid chain: S-adenosylmethionine synthase 2 (396 aa).

Glu-13 lines the Mg(2+) pocket. His-19 is a binding site for ATP. Glu-47 contacts K(+). L-methionine-binding residues include Glu-60 and Gln-103. ATP-binding positions include Asp-171–Lys-173, Ser-239–Phe-242, Asp-250, Arg-256–Lys-257, Ala-273, Lys-277, and Lys-281. Asp-250 is a binding site for L-methionine. Lys-281 is an L-methionine binding site.

Belongs to the AdoMet synthase family. In terms of assembly, homotetramer. Mn(2+) is required as a cofactor. Mg(2+) serves as cofactor. The cofactor is Co(2+). Requires K(+) as cofactor. Expressed in roots, stems and leaves (at protein level).

It is found in the cytoplasm. It carries out the reaction L-methionine + ATP + H2O = S-adenosyl-L-methionine + phosphate + diphosphate. It functions in the pathway amino-acid biosynthesis; S-adenosyl-L-methionine biosynthesis; S-adenosyl-L-methionine from L-methionine: step 1/1. Its function is as follows. Catalyzes the formation of S-adenosylmethionine from methionine and ATP. The reaction comprises two steps that are both catalyzed by the same enzyme: formation of S-adenosylmethionine (AdoMet) and triphosphate, and subsequent hydrolysis of the triphosphate. May be involved in the synthesis of betain in response to abiotic stress such as high salinity. This chain is S-adenosylmethionine synthase 2 (SAMS2), found in Atriplex nummularia (Old man saltbush).